The following is a 1119-amino-acid chain: SH3 and PX domain-containing protein 2A (1119 aa).

The PX domain occupies 4 to 128 (RTVLDVKVVD…RFFETKPDDI (125 aa)). 2 consecutive SH3 domains span residues 149 to 208 (MVLE…SQSG) and 249 to 308 (SREE…KLKD). 5 disordered regions span residues 388 to 429 (SSAT…PPRR), 494 to 595 (APSS…SNPA), 641 to 815 (SSDD…HESV), 914 to 941 (NLRS…AMLN), and 957 to 1004 (RPQS…SSFT). Positions 445-504 (TVEAEYYTIAEFQSSISDGISFRGGQKADVIEKNSGGWWYVQIGDTEGWAPSSYIDKRKK) constitute an SH3 3 domain. 2 stretches are compositionally biased toward basic and acidic residues: residues 581 to 590 (PKPEPRKFEI) and 688 to 718 (GRAE…DVEI). Low complexity predominate over residues 779 to 802 (TASVVSSEDSTSSRSTSDLSSVYS). A compositionally biased stretch (basic and acidic residues) spans 806–815 (RGGESDHESV). In terms of domain architecture, SH3 4 spans 812–871 (HESVLFRTTDAYERAQESELSFPAGVEVEVLEKQESGWWFVRWGSDEGWVPTFYLEPIKH). An SH3 5 domain is found at 1058 to 1119 (NLREVYVSIA…VPSNYLERKK (62 aa)).

The protein belongs to the SH3PXD2 family. Post-translationally, tyrosine phosphorylated.

The protein localises to the cytoplasm. It is found in the cell projection. The protein resides in the podosome. Adapter protein involved in invadopodia and podosome formation and extracellular matrix degradation. This Danio rerio (Zebrafish) protein is SH3 and PX domain-containing protein 2A (sh3pxd2a).